The chain runs to 524 residues: MVPQALLLVPLLGFSLCFGKFPIYTIPTKLGPWSPIDIHHLSCPNNLVVEDEGCTNLSGFSYMELKVGRISAIKVNGFTCTGVVTEAETYTNFVGYVTTTFKRKHFRPMPGCMYSRVQLEDGRSPQIEESLHNPYPDYHWLRTVRTTKESLIIISPSVTDLDPYDKSLHSRVFPGRKCSGITVSSTYCSTNHDYTVWMPEILRLGTSCDIFTNSRGKRASKGSKTCGFVDERGLYKSLKGACKLKLCGVPGLRLMDGTWVAMQTSNETKWCPPGQLVNLHDLHSDEIEHLVVEELVKKREECLDALESITTTKSVSFRRLSHLRKLVPGFGKAYTIFNKTLMEAEAHYKSVRTWNEIIPSKGCLRVGGGCHPHVNGVFFNGIILGPDGHVLIPEMQSSLLQQHIELLESSVIPLMHPLADPFTVFKDGDEIEDFVEVHLPDVHEQVSGVDLGLPNWGEYVLLSAGTLIALMLIIFLITCCKRVDRPESTQRSLRGTGRNVSVTSQSGKFIPSRESYKSGGETGL.

The first 19 residues, 1-19 (MVPQALLLVPLLGFSLCFG), serve as a signal peptide directing secretion. At 20–459 (KFPIYTIPTK…DLGLPNWGEY (440 aa)) the chain is on the virion surface side. Cystine bridges form between cysteine 43/cysteine 302, cysteine 54/cysteine 226, cysteine 178/cysteine 188, cysteine 208/cysteine 247, and cysteine 242/cysteine 271. N-linked (GlcNAc...) asparagine; by host glycosylation occurs at asparagine 56. Asparagine 266 and asparagine 338 each carry an N-linked (GlcNAc...) asparagine; by host glycan. Cysteine 363 and cysteine 370 are joined by a disulfide. The chain crosses the membrane as a helical span at residues 460–480 (VLLSAGTLIALMLIIFLITCC). A lipid anchor (S-palmitoyl cysteine; by host) is attached at cysteine 480. Residues 481–524 (KRVDRPESTQRSLRGTGRNVSVTSQSGKFIPSRESYKSGGETGL) lie on the Intravirion side of the membrane. The tract at residues 488 to 524 (STQRSLRGTGRNVSVTSQSGKFIPSRESYKSGGETGL) is disordered. Positions 489–507 (TQRSLRGTGRNVSVTSQSG) are enriched in polar residues.

The protein belongs to the lyssavirus glycoprotein family. Homotrimer. Interacts with matrix protein. Interacts with host TRFC. Interacts with host BST2; this interaction inhibits viral budding by tethering new virions to the cell surface. Interacts with ITGB1. Interacts with host GRM2. Glycosylated and palmitoylated by host. Glycosylation is crucial for glycoprotein export at the cell surface.

It localises to the virion membrane. Attaches the virus to host cellular receptor, inducing endocytosis of the virion by using different host proteins including TFRC, GRM2 and ITGB1. In the endosome, the acidic pH induces conformational changes in the glycoprotein trimer, which trigger fusion between virus and cell membrane. There is convincing in vitro evidence that the muscular form of the nicotinic acetylcholine receptor (nAChR), the neuronal cell adhesion molecule (NCAM), and the p75 neurotrophin receptor (p75NTR) bind glycoprotein and thereby facilitate rabies virus entry into cells. The protein is Glycoprotein (G) of Rabies virus (strain China/DRV) (RABV).